A 333-amino-acid chain; its full sequence is NADH dehydrogenase (ubiquinone) complex I, assembly factor 6 (333 aa).

The transit peptide at 1-44 directs the protein to the mitochondrion; it reads MAASAHGSVWGPLRLGIPGLCCRRPPLGLYARMRRLPGPEVSGR.

It belongs to the NDUFAF6 family. Widely expressed. A lower expression is observed in lung and kidney compared to heart, muscle and liver. In the kidney, expression is high in the basal zone of the proximal tubular cells.

The protein localises to the mitochondrion inner membrane. It is found in the cytoplasm. It localises to the nucleus. Its function is as follows. Involved in the assembly of mitochondrial NADH:ubiquinone oxidoreductase complex (complex I) at early stages. May play a role in the biogenesis of complex I subunit MT-ND1. The sequence is that of NADH dehydrogenase (ubiquinone) complex I, assembly factor 6 (NDUFAF6) from Homo sapiens (Human).